The sequence spans 799 residues: Elongation factor G, mitochondrial (799 aa).

Residues 1-24 (MRCPSLARLPHRAVSGLTRTPVRF) constitute a mitochondrion transit peptide. One can recognise a tr-type G domain in the interval 97-384 (SRVRNIGIAA…GVIDYLPNPS (288 aa)). GTP-binding positions include 106–113 (AHIDSGKT), 182–186 (DTPGH), and 236–239 (NKMD).

This sequence belongs to the TRAFAC class translation factor GTPase superfamily. Classic translation factor GTPase family. EF-G/EF-2 subfamily.

It localises to the mitochondrion. It participates in protein biosynthesis; polypeptide chain elongation. Functionally, mitochondrial GTPase that catalyzes the GTP-dependent ribosomal translocation step during translation elongation. During this step, the ribosome changes from the pre-translocational (PRE) to the post-translocational (POST) state as the newly formed A-site-bound peptidyl-tRNA and P-site-bound deacylated tRNA move to the P and E sites, respectively. Catalyzes the coordinated movement of the two tRNA molecules, the mRNA and conformational changes in the ribosome. The sequence is that of Elongation factor G, mitochondrial (mef1) from Emericella nidulans (strain FGSC A4 / ATCC 38163 / CBS 112.46 / NRRL 194 / M139) (Aspergillus nidulans).